We begin with the raw amino-acid sequence, 129 residues long: Glycine cleavage system H protein (129 aa).

The region spanning Ser-24–Met-106 is the Lipoyl-binding domain. Lys-65 is modified (N6-lipoyllysine).

Belongs to the GcvH family. In terms of assembly, the glycine cleavage system is composed of four proteins: P, T, L and H. (R)-lipoate is required as a cofactor.

Its function is as follows. The glycine cleavage system catalyzes the degradation of glycine. The H protein shuttles the methylamine group of glycine from the P protein to the T protein. The chain is Glycine cleavage system H protein from Shewanella halifaxensis (strain HAW-EB4).